The following is a 331-amino-acid chain: UPF0324 membrane protein SAR0338 (331 aa).

The next 11 helical transmembrane spans lie at Phe-9–Ala-26, Ile-31–Tyr-48, Leu-69–Gly-88, Leu-93–Leu-115, Ala-122–Phe-144, Ser-154–Phe-176, Tyr-183–Gly-202, Leu-217–Met-234, Ile-247–Pro-269, Leu-273–Val-295, and Leu-308–Tyr-330.

It belongs to the UPF0324 family.

It is found in the cell membrane. The polypeptide is UPF0324 membrane protein SAR0338 (Staphylococcus aureus (strain MRSA252)).